Here is a 416-residue protein sequence, read N- to C-terminus: Gamma-glutamyl phosphate reductase (416 aa).

The protein belongs to the gamma-glutamyl phosphate reductase family.

It localises to the cytoplasm. It carries out the reaction L-glutamate 5-semialdehyde + phosphate + NADP(+) = L-glutamyl 5-phosphate + NADPH + H(+). The protein operates within amino-acid biosynthesis; L-proline biosynthesis; L-glutamate 5-semialdehyde from L-glutamate: step 2/2. Functionally, catalyzes the NADPH-dependent reduction of L-glutamate 5-phosphate into L-glutamate 5-semialdehyde and phosphate. The product spontaneously undergoes cyclization to form 1-pyrroline-5-carboxylate. The sequence is that of Gamma-glutamyl phosphate reductase from Streptococcus equi subsp. zooepidemicus (strain MGCS10565).